Consider the following 1029-residue polypeptide: Error-prone DNA polymerase (1029 aa).

It belongs to the DNA polymerase type-C family. DnaE2 subfamily.

It localises to the cytoplasm. The catalysed reaction is DNA(n) + a 2'-deoxyribonucleoside 5'-triphosphate = DNA(n+1) + diphosphate. Functionally, DNA polymerase involved in damage-induced mutagenesis and translesion synthesis (TLS). It is not the major replicative DNA polymerase. This Saccharophagus degradans (strain 2-40 / ATCC 43961 / DSM 17024) protein is Error-prone DNA polymerase.